A 211-amino-acid polypeptide reads, in one-letter code: Large ribosomal subunit protein uL4 (211 aa).

Over residues 41–53 (QAHSRQGTASTLT) the composition is skewed to polar residues. Residues 41 to 85 (QAHSRQGTASTLTRAEVRGGGRKPYKQKGTGRARQGSIRTPLRPG) are disordered. Basic residues predominate over residues 60 to 71 (GGRKPYKQKGTG).

Belongs to the universal ribosomal protein uL4 family. In terms of assembly, part of the 50S ribosomal subunit.

In terms of biological role, one of the primary rRNA binding proteins, this protein initially binds near the 5'-end of the 23S rRNA. It is important during the early stages of 50S assembly. It makes multiple contacts with different domains of the 23S rRNA in the assembled 50S subunit and ribosome. Its function is as follows. Forms part of the polypeptide exit tunnel. This Prochlorococcus marinus (strain SARG / CCMP1375 / SS120) protein is Large ribosomal subunit protein uL4.